The chain runs to 308 residues: Cell division protein FtsQ (308 aa).

The disordered stretch occupies residues Met-1–Ala-28. The Cytoplasmic portion of the chain corresponds to Met-1–Arg-46. The segment covering Pro-18 to Ala-28 has biased composition (basic and acidic residues). Residues Thr-47–Ala-67 form a helical membrane-spanning segment. Residues Ser-68–Leu-308 are Periplasmic-facing. One can recognise a POTRA domain in the interval Phe-92–Arg-160.

Belongs to the FtsQ/DivIB family. FtsQ subfamily.

Its subcellular location is the cell inner membrane. Functionally, essential cell division protein. This Cereibacter sphaeroides (strain ATCC 17023 / DSM 158 / JCM 6121 / CCUG 31486 / LMG 2827 / NBRC 12203 / NCIMB 8253 / ATH 2.4.1.) (Rhodobacter sphaeroides) protein is Cell division protein FtsQ.